We begin with the raw amino-acid sequence, 201 residues long: Molybdenum cofactor guanylyltransferase (201 aa).

GTP-binding positions include 15–17 (LAG), lysine 28, aspartate 74, and aspartate 104. Residue aspartate 104 participates in Mg(2+) binding.

It belongs to the MobA family. In terms of assembly, monomer. Requires Mg(2+) as cofactor.

The protein resides in the cytoplasm. It carries out the reaction Mo-molybdopterin + GTP + H(+) = Mo-molybdopterin guanine dinucleotide + diphosphate. Transfers a GMP moiety from GTP to Mo-molybdopterin (Mo-MPT) cofactor (Moco or molybdenum cofactor) to form Mo-molybdopterin guanine dinucleotide (Mo-MGD) cofactor. The sequence is that of Molybdenum cofactor guanylyltransferase from Pseudomonas syringae pv. syringae (strain B728a).